A 353-amino-acid polypeptide reads, in one-letter code: Anthranilate phosphoribosyltransferase (353 aa).

Residues G79, 82–83, T87, 89–92, 107–115, and S119 contribute to the 5-phospho-alpha-D-ribose 1-diphosphate site; these read GD, NIST, and KHGNHSFTS. G79 provides a ligand contact to anthranilate. S91 contributes to the Mg(2+) binding site. N110 contacts anthranilate. R165 lines the anthranilate pocket. Residues D223 and E224 each contribute to the Mg(2+) site.

Belongs to the anthranilate phosphoribosyltransferase family. As to quaternary structure, homodimer. Mg(2+) serves as cofactor.

The enzyme catalyses N-(5-phospho-beta-D-ribosyl)anthranilate + diphosphate = 5-phospho-alpha-D-ribose 1-diphosphate + anthranilate. The protein operates within amino-acid biosynthesis; L-tryptophan biosynthesis; L-tryptophan from chorismate: step 2/5. In terms of biological role, catalyzes the transfer of the phosphoribosyl group of 5-phosphorylribose-1-pyrophosphate (PRPP) to anthranilate to yield N-(5'-phosphoribosyl)-anthranilate (PRA). This Methanococcoides burtonii (strain DSM 6242 / NBRC 107633 / OCM 468 / ACE-M) protein is Anthranilate phosphoribosyltransferase.